The chain runs to 179 residues: Large ribosomal subunit protein uL6 (179 aa).

This sequence belongs to the universal ribosomal protein uL6 family. Part of the 50S ribosomal subunit.

In terms of biological role, this protein binds to the 23S rRNA, and is important in its secondary structure. It is located near the subunit interface in the base of the L7/L12 stalk, and near the tRNA binding site of the peptidyltransferase center. This is Large ribosomal subunit protein uL6 from Bifidobacterium longum (strain DJO10A).